We begin with the raw amino-acid sequence, 53 residues long: uncharacterized protein (53 aa).

Residues 26–46 (CYLLFCFLECFLNLFKKCGVF) traverse the membrane as a helical segment.

The protein belongs to the plectrovirus ORF11 family.

The protein localises to the host membrane. This is an uncharacterized protein from Spiroplasma virus SpV1-R8A2 B (SpV1).